Consider the following 140-residue polypeptide: Natriuretic peptides B (140 aa).

The first 26 residues, 1-26 (MEPCAALPRALLLLLFLHLSPLGGRP), serve as a signal peptide directing secretion. The segment at 71 to 94 (LEPLHRSHSPAEAPEAGGTPRGVL) is disordered. A disulfide bridge links Cys118 with Cys134.

This sequence belongs to the natriuretic peptide family. The precursor molecule is proteolytically cleaved by the endoproteases FURIN or CORIN at Arg-108 to produce the brain natriuretic peptide 32. CORIN also cleaves the precursor molecule at additional residues including Arg-105, Arg-108 and possibly Lys-111. In terms of processing, undergoes further proteolytic cleavage by various proteases such as DPP4, MME and possibly FAP, to give rise to a variety of shorter peptides. Cleaved at Pro-110 by the prolyl endopeptidase FAP (seprase) activity (in vitro). Degraded by IDE. During IDE degradation, the resulting products initially increase the activation of NPR1 and can also stimulate NPR2 to produce cGMP before the fragments are completely degraded and inactivated by IDE (in vitro). As to expression, brain and also in atria, but at much lower levels than ANP.

It localises to the secreted. Its function is as follows. Cardiac hormone that plays a key role in mediating cardio-renal homeostasis. May also function as a paracrine antifibrotic factor in the heart. Acts by specifically binding and stimulating NPR1 to produce cGMP, which in turn activates effector proteins that drive various biological responses. Involved in regulating the extracellular fluid volume and maintaining the fluid-electrolyte balance through natriuresis, diuresis, vasorelaxation, and inhibition of renin and aldosterone secretion. Binds the clearance receptor NPR3. In terms of biological role, may affect cardio-renal homeostasis. Able to promote the production of cGMP although its potency is very low compared to brain natriuretic peptide 32. The chain is Natriuretic peptides B (NPPB) from Canis lupus familiaris (Dog).